A 172-amino-acid chain; its full sequence is Inorganic pyrophosphatase (172 aa).

Substrate is bound by residues Lys-29, Arg-43, and Tyr-55. Residues Asp-65, Asp-70, and Asp-102 each contribute to the Mg(2+) site. Tyr-141 is a substrate binding site.

This sequence belongs to the PPase family. Homohexamer. Mg(2+) is required as a cofactor.

Its subcellular location is the cytoplasm. The enzyme catalyses diphosphate + H2O = 2 phosphate + H(+). Catalyzes the hydrolysis of inorganic pyrophosphate (PPi) forming two phosphate ions. The sequence is that of Inorganic pyrophosphatase from Rickettsia prowazekii (strain Madrid E).